Consider the following 356-residue polypeptide: Protein RecA (356 aa).

67–74 (GPESSGKT) serves as a coordination point for ATP.

The protein belongs to the RecA family.

It is found in the cytoplasm. In terms of biological role, can catalyze the hydrolysis of ATP in the presence of single-stranded DNA, the ATP-dependent uptake of single-stranded DNA by duplex DNA, and the ATP-dependent hybridization of homologous single-stranded DNAs. It interacts with LexA causing its activation and leading to its autocatalytic cleavage. This is Protein RecA from Yersinia pestis (strain Pestoides F).